Consider the following 242-residue polypeptide: Transcriptional regulatory protein GltR (242 aa).

The Response regulatory domain occupies 7–123 (SILLVDDDQE…ELLARIKALL (117 aa)). 4-aspartylphosphate is present on Asp-56. A DNA-binding region (ompR/PhoB-type) is located at residues 134–234 (GDVLAFEDWR…VRGSGYLLAA (101 aa)).

Post-translationally, phosphorylated by GtrS.

Its subcellular location is the cytoplasm. With respect to regulation, phosphorylation of GltR induces its dissociation from DNA leading to transcriptional activation. Functionally, member of the two-component regulatory system GtrS/GltR involved in the regulation of glucose metabolism and transport, as well as regulation of the exotoxin A gene expression. GltR controls the transcription of genes involved in glucose metabolism (glk and edd/gap-1) and transport (oprB) as well as the expression of toxA that encodes exotoxin A, the primary virulence factor. Acts as a repressor that is released from its target operators upon phosphorylation. In terms of biological role, contributes to modulation of the type III secretion system (T3SS) in response to host cells via the regulation of the OprB transport system. In Pseudomonas aeruginosa (strain ATCC 15692 / DSM 22644 / CIP 104116 / JCM 14847 / LMG 12228 / 1C / PRS 101 / PAO1), this protein is Transcriptional regulatory protein GltR.